We begin with the raw amino-acid sequence, 190 residues long: Guanylate kinase (190 aa).

The Guanylate kinase-like domain maps to 8-186; sequence ARPTVLTGPS…ALAELEKQMN (179 aa). 15-22 provides a ligand contact to ATP; the sequence is GPSGVGKG.

This sequence belongs to the guanylate kinase family.

Its subcellular location is the cytoplasm. It catalyses the reaction GMP + ATP = GDP + ADP. The catalysed reaction is dZMP + ATP = dZDP + ADP. It functions in the pathway purine metabolism. Essential for recycling GMP and indirectly, cGMP. In terms of biological role, (Microbial infection) Catalyzes the phosphorylation of dZMP to dZDP, when the bacterium is infected by a phage that produces the substrate for the synthesis of dZTP (2- amino-2'-deoxyadenosine 5'-triphosphate), which is then used by the phage as a DNA polymerase substrate. The sequence is that of Guanylate kinase from Synechococcus sp. (strain CC9311).